The chain runs to 2280 residues: Genome polyprotein (2280 aa).

The 155-residue stretch at 454-608 folds into the SF3 helicase domain; sequence ETQANNIRST…EEWKKRNPGK (155 aa). An ATP-binding site is contributed by 480-487; sequence GAPGIGKT. Tyr965 is modified (O-(5'-phospho-RNA)-tyrosine). Residues 1054–1202 enclose the Peptidase C24 domain; it reads APTAIVEFTQ…TKVAQRVVKE (149 aa). Catalysis depends on for 3CLpro activity residues His1084, Glu1105, and Cys1169. A RdRp catalytic domain is found at 1442–1567; it reads GVLYCLDYSK…SVCPATASIF (126 aa). Residues 1722-1746 are disordered; that stretch reads GNGSNPEPKQSNNPMVVDPPGTTGP. Residues 1723 to 1735 are compositionally biased toward polar residues; it reads NGSNPEPKQSNNP.

In terms of assembly, homodimer. Homomultimer. In terms of processing, specific enzymatic cleavages in vivo yield mature proteins. Pro-Pol is first autocatalytically cleaved, then processes the whole polyprotein. VPg is uridylylated by the polymerase and is covalently attached to the 5'-end of the polyadenylated genomic and subgenomic RNAs. This uridylylated form acts as a nucleotide-peptide primer for the polymerase.

The protein resides in the virion. Its subcellular location is the host cytoplasm. The enzyme catalyses a ribonucleoside 5'-triphosphate + H2O = a ribonucleoside 5'-diphosphate + phosphate + H(+). It catalyses the reaction RNA(n) + a ribonucleoside 5'-triphosphate = RNA(n+1) + diphosphate. It carries out the reaction Endopeptidase with a preference for cleavage when the P1 position is occupied by Glu-|-Xaa and the P1' position is occupied by Gly-|-Yaa.. Functionally, together with NTPase and NS4, initiates the formation of the replication complex. Induces the proliferation of the host smooth ER membranes forming long tubular structures. These remodeled membranes probably form the viral factories that contain the replication complex. Displays NTPase activity, but no helicase activity. Induces the formation of convoluted membranes derived from the host ER. These remodeled membranes probably form the viral factories that contain the replication complex. Together with NS2 and NS4, initiates the formation of the replication complex. Its function is as follows. Probable key protein responsible for the formation of membrane alterations by the virus. Induces the formation of convoluted membranes derived from the host ER. These remodeled membranes probably form the viral factories that contain the replication complex. Together with NS2 and NTPase, initiates the formation of the replication complex. In terms of biological role, viral genome-linked protein is covalently linked to the 5'-end of the positive-strand, negative-strand genomic RNAs and subgenomic RNA. Acts as a genome-linked replication primer. May recruit ribosome to viral RNA thereby promoting viral proteins translation. Interacts with host translation initiation complex to allow the translation of viral proteins. Functionally, protease-polymerase p76 processes the polyprotein: Pro-Pol is first released by autocleavage, then all other proteins are cleaved. Cleaves host translation initiation factor eIF4G1, eIF4G2 and PABP1 thereby inducing a shutdown of host protein synthesis. This shutdown may not prevent viral mRNA from being translated since viral Vpg replaces the cap. It is also an RNA-directed RNA polymerase which replicates genomic and antigenomic viral RNA by recognizing specific signals. Also transcribes a subgenomic mRNA by initiating RNA synthesis internally on antigenomic RNA. This sgRNA codes for structural proteins. Catalyzes the covalent attachment VPg with viral RNAs. Capsid protein self assembles to form an icosahedral capsid with a T=3 symmetry, about 38 nm in diameter, and consisting of 180 capsid proteins. The capsid encapsulate the genomic RNA and VP2 proteins. Attaches virion to target cells, inducing endocytosis of the viral particle. Acidification of the endosome induces conformational change of capsid protein thereby injecting virus genomic RNA into host cytoplasm. The sequence is that of Genome polyprotein from Sapporo virus (isolate GI/Human/Germany/pJG-Sap01) (Hu/Dresden/pJG-Sap01/DE).